The following is a 358-amino-acid chain: 1-deoxy-D-xylulose 5-phosphate reductoisomerase (358 aa).

NADPH contacts are provided by Thr-7, Gly-8, Ser-9, Ile-10, Gly-31, Asn-33, and Asn-114. Lys-115 provides a ligand contact to 1-deoxy-D-xylulose 5-phosphate. Residue Glu-116 participates in NADPH binding. Asp-134 provides a ligand contact to Mn(2+). 1-deoxy-D-xylulose 5-phosphate-binding residues include Ser-135, Glu-136, Ser-157, and His-180. Glu-136 provides a ligand contact to Mn(2+). Gly-186 is a binding site for NADPH. The 1-deoxy-D-xylulose 5-phosphate site is built by Ser-193, Asn-198, Lys-199, and Glu-202. A Mn(2+)-binding site is contributed by Glu-202.

The protein belongs to the DXR family. The cofactor is Mg(2+). Mn(2+) is required as a cofactor.

It carries out the reaction 2-C-methyl-D-erythritol 4-phosphate + NADP(+) = 1-deoxy-D-xylulose 5-phosphate + NADPH + H(+). The protein operates within isoprenoid biosynthesis; isopentenyl diphosphate biosynthesis via DXP pathway; isopentenyl diphosphate from 1-deoxy-D-xylulose 5-phosphate: step 1/6. Functionally, catalyzes the NADPH-dependent rearrangement and reduction of 1-deoxy-D-xylulose-5-phosphate (DXP) to 2-C-methyl-D-erythritol 4-phosphate (MEP). This Wolinella succinogenes (strain ATCC 29543 / DSM 1740 / CCUG 13145 / JCM 31913 / LMG 7466 / NCTC 11488 / FDC 602W) (Vibrio succinogenes) protein is 1-deoxy-D-xylulose 5-phosphate reductoisomerase.